The chain runs to 68 residues: U-scoloptoxin(02)-Er1a (68 aa).

A signal peptide spans 1 to 20; sequence MIVSLRCCLLLVALLITVET. Intrachain disulfides connect Cys-30–Cys-52, Cys-38–Cys-58, and Cys-42–Cys-60.

This sequence belongs to the invertebrate defensin family. As to expression, expressed by the venom gland.

The protein resides in the secreted. Functionally, antibacterial peptide mostly active against Gram-positive bacteria. The polypeptide is U-scoloptoxin(02)-Er1a (Ethmostigmus rubripes (Giant centipede)).